The chain runs to 311 residues: Homeobox protein CDX-2 (311 aa).

A Phosphoserine modification is found at Ser-60. Positions 111–151 (EYHAHHHPHHHPHHPAASPSCASGLLQTLNLGPPGPAATAA) are disordered. Residues 114–124 (AHHHPHHHPHH) are compositionally biased toward basic residues. An interaction with DNA region spans residues 185–215 (KDKYRVVYTDHQRLELEKEFHFSRYITIRRK). The homeobox DNA-binding region spans 185 to 244 (KDKYRVVYTDHQRLELEKEFHFSRYITIRRKSELAATLGLSERQVKIWFQNRRAKERKIK). Positions 227–241 (RQVKIWFQNRRAKER) are interaction with 5-mCpG DNA. Residues 239–311 (KERKIKKKQQ…GGVLNSTVTQ (73 aa)) are disordered. Low complexity predominate over residues 248 to 257 (QQQQQQQQQQ). A compositionally biased stretch (pro residues) spans 258–268 (PPQPPPQPSQP). Ser-281 carries the post-translational modification Phosphoserine; by CDK2. The 4S motif; modulates transactivation activity and protein stability motif lies at 281–293 (SPVTSLQGSVPGS). Residues 285-298 (SLQGSVPGSVPGVL) are compositionally biased toward low complexity.

It belongs to the Caudal homeobox family. Can bind DNA as a monomer or homodimer. Ubiquitinated, leading to its degradation by the proteasome. Post-translationally, phosphorylation at Ser-60 reduces transactivation capacity. Phosphorylation at Ser-281 reduces transactivation capacity and increases ubiquitin-dependent proteasome degradation. In the intestine, detected in ileum and proximal and distal colon (at protein level). In adult small intestine, predominantly localized in crypt and lower villus cells of the epithelium (at protein level). Expressed in the intestine but not detected in other tissues including stomach, liver, kidney, spleen, brain, heart, lung, pancreas, skeletal muscle and testis. Expressed specifically in gut epithelium where it is not restricted to a particular cell lineage. Abundant expression is seen in the proximal colon with slightly lower levels in distal colon. Expression in the proximal colon is not restricted either to a particular cell lineage or stage of differentiation while in the distal colon it is more abundant in the differentiated cells towards the top of the crypt.

Its subcellular location is the nucleus. Transcription factor which regulates the transcription of multiple genes expressed in the intestinal epithelium. Binds to the promoter of the intestinal sucrase-isomaltase SI and activates SI transcription. Binds to the DNA sequence 5'-ATAAAAACTTAT-3' in the promoter region of VDR and activates VDR transcription. Binds to and activates transcription of LPH. Activates transcription of CLDN2 and intestinal mucin MUC2. Binds to the 5'-AATTTTTTACAACACCT-3' DNA sequence in the promoter region of CA1 and activates CA1 transcription. Important in broad range of functions from early differentiation to maintenance of the intestinal epithelial lining of both the small and large intestine. Binds preferentially to methylated DNA. The polypeptide is Homeobox protein CDX-2 (Cdx2) (Mus musculus (Mouse)).